We begin with the raw amino-acid sequence, 506 residues long: Probable alpha-L-arabinofuranosidase B (506 aa).

The first 26 residues, 1–26 (MSSGLSLERACAVALGIVASASLVAA), serve as a signal peptide directing secretion. The catalytic stretch occupies residues 27–343 (GPCDIYSSGG…ADIVAAKYAI (317 aa)). 3 disulfides stabilise this stretch: Cys29–Cys39, Cys89–Cys94, and Cys184–Cys185. The N-linked (GlcNAc...) asparagine glycan is linked to Asn91. A substrate-binding site is contributed by Asp227. Catalysis depends on Glu229, which acts as the Nucleophile. Residues Asn230 and Gly304 each coordinate substrate. Asp305 acts as the Proton donor in catalysis. The segment at 344 to 506 (ASLTSGPALT…VSWVVSTGFA (163 aa)) is ABD. A disulfide bond links Cys409 and Cys447. The substrate site is built by His424, Asn426, Phe427, Asp443, His471, Glu473, Leu476, and Asp496.

Belongs to the glycosyl hydrolase 54 family.

Its subcellular location is the secreted. The enzyme catalyses Hydrolysis of terminal non-reducing alpha-L-arabinofuranoside residues in alpha-L-arabinosides.. The protein operates within glycan metabolism; L-arabinan degradation. Alpha-L-arabinofuranosidase involved in the degradation of arabinoxylan, a major component of plant hemicellulose. Able to hydrolyze 1,5-, 1,3- and 1,2-alpha-linkages not only in L-arabinofuranosyl oligosaccharides, but also in polysaccharides containing terminal non-reducing L-arabinofuranoses in side chains, like L-arabinan, arabinogalactan and arabinoxylan. The chain is Probable alpha-L-arabinofuranosidase B (abfB) from Aspergillus flavus (strain ATCC 200026 / FGSC A1120 / IAM 13836 / NRRL 3357 / JCM 12722 / SRRC 167).